Here is a 282-residue protein sequence, read N- to C-terminus: Bifunctional protein FolD (282 aa).

NADP(+) contacts are provided by residues 166-168 (GRS) and Ser-191.

Belongs to the tetrahydrofolate dehydrogenase/cyclohydrolase family. Homodimer.

The catalysed reaction is (6R)-5,10-methylene-5,6,7,8-tetrahydrofolate + NADP(+) = (6R)-5,10-methenyltetrahydrofolate + NADPH. It catalyses the reaction (6R)-5,10-methenyltetrahydrofolate + H2O = (6R)-10-formyltetrahydrofolate + H(+). The protein operates within one-carbon metabolism; tetrahydrofolate interconversion. Catalyzes the oxidation of 5,10-methylenetetrahydrofolate to 5,10-methenyltetrahydrofolate and then the hydrolysis of 5,10-methenyltetrahydrofolate to 10-formyltetrahydrofolate. The protein is Bifunctional protein FolD of Acidovorax sp. (strain JS42).